The primary structure comprises 497 residues: Glutamate--tRNA ligase (497 aa).

Residues 12 to 22 carry the 'HIGH' region motif; sequence PSPTGHLHIGN. A 'KMSKS' region motif is present at residues 259–263; it reads KLSKR. Lysine 262 lines the ATP pocket.

The protein belongs to the class-I aminoacyl-tRNA synthetase family. Glutamate--tRNA ligase type 1 subfamily. In terms of assembly, monomer.

Its subcellular location is the cytoplasm. It catalyses the reaction tRNA(Glu) + L-glutamate + ATP = L-glutamyl-tRNA(Glu) + AMP + diphosphate. Catalyzes the attachment of glutamate to tRNA(Glu) in a two-step reaction: glutamate is first activated by ATP to form Glu-AMP and then transferred to the acceptor end of tRNA(Glu). This chain is Glutamate--tRNA ligase, found in Lacticaseibacillus casei (strain BL23) (Lactobacillus casei).